A 681-amino-acid polypeptide reads, in one-letter code: Glycogen-binding subunit 76A (681 aa).

5 disordered regions span residues 1-20, 53-94, 232-251, 285-391, and 405-435; these read MNDP…SRPP, LGSQ…DLQP, SLTE…NGHL, FADR…ASNL, and QDAT…CRPQ. A compositionally biased stretch (acidic residues) spans 59–69; that stretch reads EEGEGNAEDEP. The segment covering 72–91 has biased composition (polar residues); it reads NGTSTNTWVNSHDSEQTVTD. Basic and acidic residues-rich tracts occupy residues 237 to 251, 297 to 308, and 321 to 336; these read EQTK…NGHL, RVQKESSQERVP, and PSDR…RVQE. A compositionally biased stretch (polar residues) spans 353 to 364; sequence TESISTEVTTLE. Basic and acidic residues predominate over residues 365 to 374; the sequence is RSPEESRNDE. In terms of domain architecture, CBM21 spans 525-632; that stretch reads AVREKQVSLE…NNYGANYCFQ (108 aa). Thr-545 is modified (phosphothreonine). 2 positions are modified to phosphoserine: Ser-547 and Ser-549.

This is Glycogen-binding subunit 76A (Gbs-76A) from Drosophila melanogaster (Fruit fly).